A 178-amino-acid chain; its full sequence is Large ribosomal subunit protein bL25 (178 aa).

This sequence belongs to the bacterial ribosomal protein bL25 family. CTC subfamily. Part of the 50S ribosomal subunit; part of the 5S rRNA/L5/L18/L25 subcomplex. Contacts the 5S rRNA. Binds to the 5S rRNA independently of L5 and L18.

In terms of biological role, this is one of the proteins that binds to the 5S RNA in the ribosome where it forms part of the central protuberance. This is Large ribosomal subunit protein bL25 from Helicobacter hepaticus (strain ATCC 51449 / 3B1).